The following is a 402-amino-acid chain: D-mannonate dehydratase (402 aa).

The substrate site is built by Asn37 and His122. Tyr159 functions as the Proton donor/acceptor in the catalytic mechanism. Mg(2+) is bound at residue Asp210. His212 functions as the Proton donor/acceptor in the catalytic mechanism. Positions 236 and 262 each coordinate Mg(2+). The substrate site is built by Glu262, Arg283, His312, Asp316, and Glu339.

Belongs to the mandelate racemase/muconate lactonizing enzyme family. GalD subfamily. Mg(2+) is required as a cofactor.

It catalyses the reaction D-mannonate = 2-dehydro-3-deoxy-D-gluconate + H2O. It participates in carbohydrate metabolism; pentose and glucuronate interconversion. Functionally, catalyzes the dehydration of D-mannonate. Has no detectable activity with a panel of 70 other acid sugars (in vitro). This Rhizorhabdus wittichii (strain DSM 6014 / CCUG 31198 / JCM 15750 / NBRC 105917 / EY 4224 / RW1) (Sphingomonas wittichii) protein is D-mannonate dehydratase.